Consider the following 207-residue polypeptide: 3-demethoxyubiquinol 3-hydroxylase (207 aa).

6 residues coordinate Fe cation: glutamate 56, glutamate 86, histidine 89, glutamate 138, glutamate 170, and histidine 173.

Belongs to the COQ7 family. Fe cation serves as cofactor.

Its subcellular location is the cell membrane. It carries out the reaction a 5-methoxy-2-methyl-3-(all-trans-polyprenyl)benzene-1,4-diol + AH2 + O2 = a 3-demethylubiquinol + A + H2O. Its pathway is cofactor biosynthesis; ubiquinone biosynthesis. Functionally, catalyzes the hydroxylation of 2-nonaprenyl-3-methyl-6-methoxy-1,4-benzoquinol during ubiquinone biosynthesis. In Dechloromonas aromatica (strain RCB), this protein is 3-demethoxyubiquinol 3-hydroxylase.